The chain runs to 232 residues: 7-cyano-7-deazaguanine synthase (232 aa).

8–18 serves as a coordination point for ATP; the sequence is FSGGQDSTTCL. Zn(2+) is bound by residues C189, C198, C201, and C204.

The protein belongs to the QueC family. Requires Zn(2+) as cofactor.

The catalysed reaction is 7-carboxy-7-deazaguanine + NH4(+) + ATP = 7-cyano-7-deazaguanine + ADP + phosphate + H2O + H(+). The protein operates within purine metabolism; 7-cyano-7-deazaguanine biosynthesis. Functionally, catalyzes the ATP-dependent conversion of 7-carboxy-7-deazaguanine (CDG) to 7-cyano-7-deazaguanine (preQ(0)). The chain is 7-cyano-7-deazaguanine synthase from Proteus mirabilis (strain HI4320).